A 66-amino-acid chain; its full sequence is Protein I177L (66 aa).

Belongs to the asfivirus I177L family.

It localises to the virion. The protein is Protein I177L of Ornithodoros (relapsing fever ticks).